Reading from the N-terminus, the 167-residue chain is Small ribosomal subunit protein uS3m (167 aa).

The N-terminal 35 residues, 1 to 35, are a transit peptide targeting the mitochondrion; sequence MAASVCSGLLGPRVLSWSRELPCAWRALHTSPVCA.

Belongs to the universal ribosomal protein uS3 family. In terms of assembly, component of the mitochondrial small ribosomal subunit (mt-SSU). Mature mammalian 55S mitochondrial ribosomes consist of a small (28S) and a large (39S) subunit. The 28S small subunit contains a 12S ribosomal RNA (12S mt-rRNA) and 30 different proteins. The 39S large subunit contains a 16S rRNA (16S mt-rRNA), a copy of mitochondrial valine transfer RNA (mt-tRNA(Val)), which plays an integral structural role, and 52 different proteins.

Its subcellular location is the mitochondrion. In Homo sapiens (Human), this protein is Small ribosomal subunit protein uS3m (MRPS24).